The sequence spans 160 residues: Phosphopantetheine adenylyltransferase (160 aa).

A substrate-binding site is contributed by serine 9. ATP-binding positions include 9-10 (SF) and histidine 17. Substrate-binding residues include lysine 41, leucine 73, and lysine 87. ATP is bound by residues 88–90 (GLR), glutamate 98, and 123–129 (YGYLSSS).

It belongs to the bacterial CoaD family. Homohexamer. It depends on Mg(2+) as a cofactor.

It localises to the cytoplasm. It carries out the reaction (R)-4'-phosphopantetheine + ATP + H(+) = 3'-dephospho-CoA + diphosphate. The protein operates within cofactor biosynthesis; coenzyme A biosynthesis; CoA from (R)-pantothenate: step 4/5. Its function is as follows. Reversibly transfers an adenylyl group from ATP to 4'-phosphopantetheine, yielding dephospho-CoA (dPCoA) and pyrophosphate. This Caldanaerobacter subterraneus subsp. tengcongensis (strain DSM 15242 / JCM 11007 / NBRC 100824 / MB4) (Thermoanaerobacter tengcongensis) protein is Phosphopantetheine adenylyltransferase.